A 122-amino-acid polypeptide reads, in one-letter code: Large ribosomal subunit protein uL14c (122 aa).

Belongs to the universal ribosomal protein uL14 family. In terms of assembly, part of the 50S ribosomal subunit.

It localises to the plastid. The protein resides in the chloroplast. Binds to 23S rRNA. This chain is Large ribosomal subunit protein uL14c, found in Tupiella akineta (Green alga).